The sequence spans 235 residues: Homeobox-leucine zipper protein ATHB-12 (235 aa).

Residues 27–86 (KSNNQKRFSEEQIKSLELIFESETRLEPRKKVQVARELGLQPRQVAIWFQNKRARWKTKQ) constitute a DNA-binding region (homeobox). Residues 87-122 (LEKEYNTLRANYNNLASQFEIMKKEKQSLVSELQRL) form a leucine-zipper region. Composition is skewed to basic and acidic residues over residues 128–138 (RPKEEKHHECC) and 152–162 (HNGKSEPEGRL). The tract at residues 128–167 (RPKEEKHHECCGDQGLALSSSTESHNGKSEPEGRLDQGSV) is disordered.

This sequence belongs to the HD-ZIP homeobox family. Class I subfamily. As to quaternary structure, interacts with TFIIB1. Widely expressed.

It localises to the nucleus. In terms of biological role, probable transcription activator that may act as growth regulators in response to water deficit. This Arabidopsis thaliana (Mouse-ear cress) protein is Homeobox-leucine zipper protein ATHB-12 (ATHB-12).